The following is a 145-amino-acid chain: Alpha-amylase/trypsin inhibitor CM2 (145 aa).

An N-terminal signal peptide occupies residues 1 to 25 (MASKSSITHLLLAAVLVSVFAAAAA).

It belongs to the protease inhibitor I6 (cereal trypsin/alpha-amylase inhibitor) family. In terms of tissue distribution, developing endosperm.

The protein resides in the secreted. Functionally, alpha-amylase/trypsin inhibitor. It could be involved in insect defense mechanisms. This Triticum aestivum (Wheat) protein is Alpha-amylase/trypsin inhibitor CM2.